Reading from the N-terminus, the 175-residue chain is MAGKTMIPLLAFAAWSGTGKTTLLKKLIPALCARGIRPGLIKHTHHDMDVDKPGKDSYELRKAGAAQTIVASQQRWALMTETPDEEELDLQFLASRMDTSKLDLILVEGFKHEEIAKIVLFRDGAGHRPEELVIDRHVIAVASDVPLNLDVALLDINDVEGLADFVVEWMQKQNG.

Residues 17 to 21, 51 to 54, and 100 to 103 each bind GTP; these read GTGKT, DKPG, and SKLD.

The protein belongs to the MobB family. Homodimer. Interacts with MobA, MogA and MoeA in vivo.

Its function is as follows. GTP-binding protein that is not required for the biosynthesis of Mo-molybdopterin guanine dinucleotide (Mo-MGD) cofactor, and not necessary for the formation of active molybdoenzymes using this form of molybdenum cofactor. May act as an adapter protein to achieve the efficient biosynthesis and utilization of MGD. Displays a weak intrinsic GTPase activity. Is also able to bind the nucleotides ATP, TTP and GDP, but with lower affinity than GTP. This Escherichia coli (strain K12) protein is Molybdopterin-guanine dinucleotide biosynthesis adapter protein (mobB).